Reading from the N-terminus, the 186-residue chain is Bilin biosynthesis protein CpeZ (186 aa).

In terms of biological role, involved in the biosynthesis of bilin. The sequence is that of Bilin biosynthesis protein CpeZ (cpeZ) from Synechococcus sp. (strain WH8020).